Consider the following 327-residue polypeptide: Phenylalanine--tRNA ligase alpha subunit (327 aa).

Mg(2+) is bound at residue Glu-252.

This sequence belongs to the class-II aminoacyl-tRNA synthetase family. Phe-tRNA synthetase alpha subunit type 1 subfamily. Tetramer of two alpha and two beta subunits. The cofactor is Mg(2+).

Its subcellular location is the cytoplasm. The catalysed reaction is tRNA(Phe) + L-phenylalanine + ATP = L-phenylalanyl-tRNA(Phe) + AMP + diphosphate + H(+). This chain is Phenylalanine--tRNA ligase alpha subunit, found in Serratia proteamaculans (strain 568).